The sequence spans 467 residues: Acid phosphatase PHO12 (467 aa).

Residues 1–17 (MLKSAVYSILAASLVNA) form the signal peptide. H75 (nucleophile) is an active-site residue. N-linked (GlcNAc...) asparagine glycosylation is found at N97, N162, N192, N250, and N315. D338 acts as the Proton donor in catalysis. Residues N356, N390, N439, N445, and N461 are each glycosylated (N-linked (GlcNAc...) asparagine).

The protein belongs to the histidine acid phosphatase family. In terms of processing, glycosylated during secretion across the membrane.

It carries out the reaction a phosphate monoester + H2O = an alcohol + phosphate. The chain is Acid phosphatase PHO12 (PHO12) from Saccharomyces cerevisiae (strain ATCC 204508 / S288c) (Baker's yeast).